A 466-amino-acid chain; its full sequence is Asparagine--tRNA ligase (466 aa).

This sequence belongs to the class-II aminoacyl-tRNA synthetase family. As to quaternary structure, homodimer.

It is found in the cytoplasm. It carries out the reaction tRNA(Asn) + L-asparagine + ATP = L-asparaginyl-tRNA(Asn) + AMP + diphosphate + H(+). This chain is Asparagine--tRNA ligase, found in Shewanella amazonensis (strain ATCC BAA-1098 / SB2B).